The primary structure comprises 1295 residues: DNA-directed RNA polymerase subunit beta' (1295 aa).

The Zn(2+) site is built by cysteine 66, cysteine 68, cysteine 81, and cysteine 84. The Mg(2+) site is built by aspartate 562, aspartate 564, and aspartate 566. Residues cysteine 901, cysteine 975, cysteine 982, and cysteine 985 each coordinate Zn(2+).

The protein belongs to the RNA polymerase beta' chain family. The RNAP catalytic core consists of 2 alpha, 1 beta, 1 beta' and 1 omega subunit. When a sigma factor is associated with the core the holoenzyme is formed, which can initiate transcription. Requires Mg(2+) as cofactor. The cofactor is Zn(2+).

It catalyses the reaction RNA(n) + a ribonucleoside 5'-triphosphate = RNA(n+1) + diphosphate. Functionally, DNA-dependent RNA polymerase catalyzes the transcription of DNA into RNA using the four ribonucleoside triphosphates as substrates. In Rubrobacter xylanophilus (strain DSM 9941 / JCM 11954 / NBRC 16129 / PRD-1), this protein is DNA-directed RNA polymerase subunit beta'.